A 210-amino-acid chain; its full sequence is Cytochrome c4 (210 aa).

A signal peptide spans 1–20; sequence MNKALVTLLLTLGITGLAHA. Residues cysteine 34, cysteine 37, histidine 38, methionine 86, cysteine 139, cysteine 142, histidine 143, and methionine 187 each coordinate heme c.

Binds 2 heme c groups covalently per subunit.

It localises to the periplasm. Functionally, diheme, high potential cytochrome c believed to be an intermediate electron donor to terminal oxidation systems. This is Cytochrome c4 (cycA) from Azotobacter vinelandii.